Consider the following 723-residue polypeptide: Fatty acid oxidation complex subunit alpha (723 aa).

An enoyl-CoA hydratase/isomerase region spans residues 1-189 (MIYQAETLQV…KIGLLDAVVD (189 aa)). Asp-296 contributes to the substrate binding site. The interval 311-723 (SKDTQRAAVL…FYGAQQQGSI (413 aa)) is 3-hydroxyacyl-CoA dehydrogenase. NAD(+) contacts are provided by residues Met-325, Asp-344, 401–403 (VVE), Lys-408, and Ser-430. Residue His-451 is the For 3-hydroxyacyl-CoA dehydrogenase activity of the active site. NAD(+) is bound at residue Asn-454. Residues Asn-501 and Tyr-661 each contribute to the substrate site.

It in the N-terminal section; belongs to the enoyl-CoA hydratase/isomerase family. This sequence in the C-terminal section; belongs to the 3-hydroxyacyl-CoA dehydrogenase family. As to quaternary structure, heterotetramer of two alpha chains (FadB) and two beta chains (FadA).

The catalysed reaction is a (3S)-3-hydroxyacyl-CoA + NAD(+) = a 3-oxoacyl-CoA + NADH + H(+). It carries out the reaction a (3S)-3-hydroxyacyl-CoA = a (2E)-enoyl-CoA + H2O. It catalyses the reaction a 4-saturated-(3S)-3-hydroxyacyl-CoA = a (3E)-enoyl-CoA + H2O. The enzyme catalyses (3S)-3-hydroxybutanoyl-CoA = (3R)-3-hydroxybutanoyl-CoA. The catalysed reaction is a (3Z)-enoyl-CoA = a 4-saturated (2E)-enoyl-CoA. It carries out the reaction a (3E)-enoyl-CoA = a 4-saturated (2E)-enoyl-CoA. It functions in the pathway lipid metabolism; fatty acid beta-oxidation. Its function is as follows. Involved in the aerobic and anaerobic degradation of long-chain fatty acids via beta-oxidation cycle. Catalyzes the formation of 3-oxoacyl-CoA from enoyl-CoA via L-3-hydroxyacyl-CoA. It can also use D-3-hydroxyacyl-CoA and cis-3-enoyl-CoA as substrate. The sequence is that of Fatty acid oxidation complex subunit alpha from Vibrio campbellii (strain ATCC BAA-1116).